A 239-amino-acid polypeptide reads, in one-letter code: Thymidylate kinase (239 aa).

Residue 10-17 coordinates ATP; that stretch reads GINGVGKS.

This sequence belongs to the thymidylate kinase family.

It catalyses the reaction dTMP + ATP = dTDP + ADP. It participates in pyrimidine metabolism; dTTP biosynthesis. In terms of biological role, catalyzes the conversion of dTMP to dTDP. The chain is Thymidylate kinase (TMK) from African swine fever virus (isolate Warthog/Namibia/Wart80/1980) (ASFV).